Here is a 257-residue protein sequence, read N- to C-terminus: Protein-tyrosine-phosphatase IBR5 (257 aa).

One can recognise a Tyrosine-protein phosphatase domain in the interval 49 to 185; sequence FPSEILPEFL…LQEFEQGIFG (137 aa). The active-site Phosphocysteine intermediate is C129. The tract at residues 235–257 is disordered; it reads QEFTFGATPPKPTTGGDIAMDGS.

The protein belongs to the protein-tyrosine phosphatase family. As to quaternary structure, interacts with SKP1A/ASK1 and with MPK12. As to expression, expressed in root tips and vasculature, cotyledons, stems, leaves vasculature and hydathodes, flowers, siliques, and seeds.

The protein localises to the nucleus. The catalysed reaction is O-phospho-L-tyrosyl-[protein] + H2O = L-tyrosyl-[protein] + phosphate. In terms of biological role, required for the transduction of auxin and abscisic acid (ABA) signaling pathways. Dephosphorylates and inactivates the MAP kinase MPK12. In Arabidopsis thaliana (Mouse-ear cress), this protein is Protein-tyrosine-phosphatase IBR5 (IBR5).